Consider the following 98-residue polypeptide: Serine protease inhibitor Kazal-type 14 (98 aa).

An N-terminal signal peptide occupies residues 1–23; the sequence is MVKYFQVLWSLLFSIMLHSMLLA. The Kazal-like domain maps to 35-98; sequence GLIKIKCPYK…QIRYYHTGRC (64 aa). Cystine bridges form between C41/C80, C58/C77, and C66/C98. Residue N52 is glycosylated (N-linked (GlcNAc...) asparagine).

Its subcellular location is the secreted. May be a serine protease inhibitor. The chain is Serine protease inhibitor Kazal-type 14 (Spink14) from Rattus norvegicus (Rat).